Consider the following 83-residue polypeptide: MKASMFLALAGLVLLFVVGYASESEEKEFPIELLSKIFAVDVFKGEERGCRGFGDSCTPGKNECCPNHACSNKHKWCKVYLGK.

Residues 1–21 form the signal peptide; sequence MKASMFLALAGLVLLFVVGYA. Residues 22-48 constitute a propeptide that is removed on maturation; it reads SESEEKEFPIELLSKIFAVDVFKGEER. Disulfide bonds link Cys-50–Cys-65, Cys-57–Cys-70, and Cys-64–Cys-77. At Leu-81 the chain carries Leucine amide.

This sequence belongs to the neurotoxin 10 (Hwtx-1) family. 15 (Hntx-3) subfamily. Monomer. In terms of tissue distribution, expressed by the venom gland.

The protein localises to the secreted. Functionally, lethal neurotoxin. Selectively blocks tetrodotoxin-sensitive voltage-gated sodium channels (Nav). Does not affect tetrodotoxin-resistant voltage-gated sodium channels or calcium channels. The polypeptide is Mu-theraphotoxin-Hhn2f (Cyriopagopus hainanus (Chinese bird spider)).